A 390-amino-acid polypeptide reads, in one-letter code: Neuromedin-B receptor (390 aa).

Over 1 to 41 (MPPRSLSNLSFPTEANESELVPEVWEKDFLPDSDGTTAELV) the chain is Extracellular. 2 N-linked (GlcNAc...) asparagine glycosylation sites follow: Asn8 and Asn16. A helical transmembrane segment spans residues 42-65 (IRCVIPSLYLIIISVGLLGNIMLV). At 66–79 (KIFLTNSAMRNVPN) the chain is on the cytoplasmic side. Residues 80–99 (IFISNLAAGDLLLLLTCVPV) traverse the membrane as a helical segment. Topologically, residues 100–117 (DASRYFFDEWVFGKLGCK) are extracellular. An intrachain disulfide couples Cys116 to Cys198. A helical membrane pass occupies residues 118–139 (LIPAIQLTSVGVSVFTLTALSA). Residues 140–156 (DRYRAIVNPMDMQTSGV) lie on the Cytoplasmic side of the membrane. Residues 157–177 (LLWTSLKAVGIWVVSVLLAVP) traverse the membrane as a helical segment. At 178–211 (EAVFSEVARIGSLDNSSFTACIPYPQTDELHPKI) the chain is on the extracellular side. N-linked (GlcNAc...) asparagine glycosylation is present at Asn192. The helical transmembrane segment at 212–235 (HSVLIFLVYFLIPLVIISIYYYHI) threads the bilayer. The Cytoplasmic segment spans residues 236–266 (AKTLIKSAHNLPGEYNEHTKKQMETRKRLAK). Residues 267–287 (IVLVFVGCFVFCWFPNHVLYL) traverse the membrane as a helical segment. At 288–299 (YRSFNYKEIDPS) the chain is on the extracellular side. A helical membrane pass occupies residues 300–327 (LGHMIVTLVARVLSFSNSCVNPFALYLL). Topologically, residues 328–390 (SESFRKHFNS…GHSTKQEIAL (63 aa)) are cytoplasmic. The S-palmitoyl cysteine moiety is linked to residue Cys341. Ser352 is modified (phosphoserine).

It belongs to the G-protein coupled receptor 1 family. Expressed in a subset of neurons of the pre-Botzinger complex. Within the pre-Botzinger complex, there is some overlap with neurons expressing Grpr with some cells expressing only Grpr or Nmbr while some cells express both. Expressed in dorsal root ganglion neurons and mast cells. Expressed in lung.

It localises to the cell membrane. Its function is as follows. Receptor for neuromedin-B. Contributes to the maintenance of basal sigh rate through signaling in the pre-Botzinger complex, a cluster of several thousand neurons in the ventrolateral medulla responsible for inspiration during respiratory activity. Contributes to the induction of sneezing following exposure to chemical irritants or allergens which causes release of NMB by nasal sensory neurons and activation of NMBR-expressing neurons in the sneeze-evoking region of the brainstem. These in turn activate neurons of the caudal ventral respiratory group, giving rise to the sneezing response. Contributes to induction of acute itch, possibly through its activation on dorsal root ganglion neurons by the NMB peptide. Plays a role in the innate immune response to influenza A virus infection by enhancing interferon alpha expression and reducing expression of IL6. Plays a role in CSF1-induced proliferation of osteoclast precursors by contributing to the positive regulation of the expression of the CSF1 receptor CSF1R. This is Neuromedin-B receptor (Nmbr) from Mus musculus (Mouse).